The sequence spans 118 residues: Holo-[acyl-carrier-protein] synthase (118 aa).

Positions 8 and 58 each coordinate Mg(2+).

The protein belongs to the P-Pant transferase superfamily. AcpS family. Requires Mg(2+) as cofactor.

It is found in the cytoplasm. The enzyme catalyses apo-[ACP] + CoA = holo-[ACP] + adenosine 3',5'-bisphosphate + H(+). Functionally, transfers the 4'-phosphopantetheine moiety from coenzyme A to a Ser of acyl-carrier-protein. In Streptococcus equi subsp. zooepidemicus (strain MGCS10565), this protein is Holo-[acyl-carrier-protein] synthase.